The chain runs to 1948 residues: Receptor-type tyrosine-protein phosphatase S (1948 aa).

Positions 1-29 are cleaved as a signal peptide; sequence MAPTWGPGMVSVVGPMGLLVVLLVGGCAA. Topologically, residues 30 to 1282 are extracellular; that stretch reads EEPPRFIKEP…PQPIVDGEEG (1253 aa). Ig-like C2-type domains are found at residues 33 to 123, 135 to 233, and 245 to 327; these read PRFI…AKLT, PNID…ANLY, and PRFS…AQIT. Cystine bridges form between Cys-54-Cys-107 and Cys-156-Cys-216. The tract at residues 68-72 is important for binding to glycosaminoglycan chains; it reads KKGKK. Asn-263 and Asn-308 each carry an N-linked (GlcNAc...) asparagine glycan. A disulfide bond links Cys-266 and Cys-311. 8 consecutive Fibronectin type-III domains span residues 334-424, 429-523, 527-616, 621-718, 723-831, 832-930, 931-1033, and 1036-1120; these read APGT…TGEQ, APRN…TQQG, QPMN…TLQS, PPQD…TDED, PPRK…TKGA, VLGR…TPRG, HPQI…FLRD, and SPKN…TAFN. Residues 700–724 are disordered; it reads TEVGPGPESSPVVVRTDEDVPSAPP. Residues 701 to 713 are compositionally biased toward low complexity; that stretch reads EVGPGPESSPVVV. A glycan (N-linked (GlcNAc...) asparagine) is linked at Asn-733. N-linked (GlcNAc...) asparagine glycosylation is present at Asn-940. Residues 1283-1303 form a helical membrane-spanning segment; sequence LIWVIGPVLAVVFIICIVIAI. Topologically, residues 1304 to 1948 are cytoplasmic; sequence LLYKNKPDSK…YLGSFDHYAT (645 aa). 2 stretches are compositionally biased toward basic and acidic residues: residues 1311–1321 and 1331–1340; these read DSKRKDSEPRT and APHHPKDPVE. The interval 1311 to 1340 is disordered; that stretch reads DSKRKDSEPRTKCLLNNADLAPHHPKDPVE. Tyrosine-protein phosphatase domains follow at residues 1393 to 1648 and 1680 to 1939; these read LSQE…LLEA and MELE…ALEY. Substrate is bound by residues Asp-1557, 1589–1595, and Gln-1633; that span reads CSAGVGR. The active-site Phosphocysteine intermediate is the Cys-1589. Cys-1880 acts as the Phosphocysteine intermediate in catalysis.

The protein belongs to the protein-tyrosine phosphatase family. Receptor class 2A subfamily. Binding to large heparan sulfate proteoglycan structures promotes oligomerization. Binding to chondroitin sulfate proteoglycan does not lead to oligomerization. Interacts (via Ig-like domains) with NTRK3. Interacts (via Ig-like domains) with NTRK1, but does not form detectable complexes with NTRK2. Interacts with PPFIA1, PPFIA2 and PPFIA3. Post-translationally, a cleavage occurs, separating the extracellular domain from the transmembrane segment. This process called 'ectodomain shedding' is thought to be involved in receptor desensitization, signal transduction and/or membrane localization. As to expression, detected in peripheral blood plasmacytoid dendritic cells (at protein level). Detected in all tissues tested except for placenta and liver. Detected in peripheral blood plasmacytoid dendritic cells.

It is found in the cell membrane. It localises to the cell projection. The protein resides in the axon. The protein localises to the perikaryon. Its subcellular location is the cytoplasmic vesicle. It is found in the secretory vesicle. It localises to the synaptic vesicle membrane. The protein resides in the synapse. The protein localises to the synaptosome. Its subcellular location is the postsynaptic density. It is found in the neuron projection. It localises to the growth cone. It carries out the reaction O-phospho-L-tyrosyl-[protein] + H2O = L-tyrosyl-[protein] + phosphate. Its function is as follows. Cell surface receptor that binds to glycosaminoglycans, including chondroitin sulfate proteoglycans and heparan sulfate proteoglycan. Binding to chondroitin sulfate and heparan sulfate proteoglycans has opposite effects on PTPRS oligomerization and regulation of neurite outgrowth. Contributes to the inhibition of neurite and axonal outgrowth by chondroitin sulfate proteoglycans, also after nerve transection. Plays a role in stimulating neurite outgrowth in response to the heparan sulfate proteoglycan GPC2. Required for normal brain development, especially for normal development of the pituitary gland and the olfactory bulb. Functions as a tyrosine phosphatase. Mediates dephosphorylation of NTRK1, NTRK2 and NTRK3. Plays a role in down-regulation of signaling cascades that lead to the activation of Akt and MAP kinases. Down-regulates TLR9-mediated activation of NF-kappa-B, as well as production of TNF, interferon alpha and interferon beta. The polypeptide is Receptor-type tyrosine-protein phosphatase S (PTPRS) (Homo sapiens (Human)).